A 163-amino-acid chain; its full sequence is S-ribosylhomocysteine lyase (163 aa).

Residues H54, H58, and C128 each coordinate Fe cation.

This sequence belongs to the LuxS family. Homodimer. The cofactor is Fe cation.

It carries out the reaction S-(5-deoxy-D-ribos-5-yl)-L-homocysteine = (S)-4,5-dihydroxypentane-2,3-dione + L-homocysteine. In terms of biological role, involved in the synthesis of autoinducer 2 (AI-2) which is secreted by bacteria and is used to communicate both the cell density and the metabolic potential of the environment. The regulation of gene expression in response to changes in cell density is called quorum sensing. Catalyzes the transformation of S-ribosylhomocysteine (RHC) to homocysteine (HC) and 4,5-dihydroxy-2,3-pentadione (DPD). This chain is S-ribosylhomocysteine lyase, found in Wolinella succinogenes (strain ATCC 29543 / DSM 1740 / CCUG 13145 / JCM 31913 / LMG 7466 / NCTC 11488 / FDC 602W) (Vibrio succinogenes).